The chain runs to 266 residues: Small ribosomal subunit protein uS2 (266 aa).

It belongs to the universal ribosomal protein uS2 family.

The chain is Small ribosomal subunit protein uS2 from Paramagnetospirillum magneticum (strain ATCC 700264 / AMB-1) (Magnetospirillum magneticum).